The chain runs to 142 residues: Large ribosomal subunit protein uL11 (142 aa).

It belongs to the universal ribosomal protein uL11 family. In terms of assembly, part of the ribosomal stalk of the 50S ribosomal subunit. Interacts with L10 and the large rRNA to form the base of the stalk. L10 forms an elongated spine to which L12 dimers bind in a sequential fashion forming a multimeric L10(L12)X complex. Post-translationally, one or more lysine residues are methylated.

Functionally, forms part of the ribosomal stalk which helps the ribosome interact with GTP-bound translation factors. This chain is Large ribosomal subunit protein uL11, found in Bradyrhizobium sp. (strain BTAi1 / ATCC BAA-1182).